The chain runs to 172 residues: Propanediol dehydratase small subunit (172 aa).

It belongs to the diol/glycerol dehydratase small subunit family. The propanediol dehydratase enzyme is a heterotrimeric complex composed of a large (PduC), a medium (PduD) and a small (PduE) subunit. Adenosylcob(III)alamin serves as cofactor.

Its subcellular location is the bacterial microcompartment. The enzyme catalyses propane-1,2-diol = propanal + H2O. Its pathway is polyol metabolism; 1,2-propanediol degradation. Its function is as follows. Part of the PduCDE complex that catalyzes the dehydration of 1,2-propanediol (1,2-PD) to propionaldehyde. Localized in the bacterial microcompartment (BMC) dedicated to 1,2-PD degradation. Functionally, expression of a cosmid containing the full 21-gene pdu operon in E.coli allows E.coli to grow on 1,2-propanediol (1,2-PD) with the appearance of BMCs in its cytoplasm. In terms of biological role, the 1,2-PD-specific bacterial microcompartment (BMC) concentrates low levels of 1,2-PD catabolic enzymes, concentrates volatile reaction intermediates thus enhancing pathway flux and keeps the level of toxic, mutagenic propionaldehyde low. The protein is Propanediol dehydratase small subunit of Citrobacter freundii.